The primary structure comprises 465 residues: ATP synthase subunit beta (465 aa).

Residue 149–156 (GGAGVGKT) participates in ATP binding.

The protein belongs to the ATPase alpha/beta chains family. As to quaternary structure, F-type ATPases have 2 components, CF(1) - the catalytic core - and CF(0) - the membrane proton channel. CF(1) has five subunits: alpha(3), beta(3), gamma(1), delta(1), epsilon(1). CF(0) has three main subunits: a(1), b(2) and c(9-12). The alpha and beta chains form an alternating ring which encloses part of the gamma chain. CF(1) is attached to CF(0) by a central stalk formed by the gamma and epsilon chains, while a peripheral stalk is formed by the delta and b chains.

The protein localises to the cell inner membrane. It carries out the reaction ATP + H2O + 4 H(+)(in) = ADP + phosphate + 5 H(+)(out). Its function is as follows. Produces ATP from ADP in the presence of a proton gradient across the membrane. The catalytic sites are hosted primarily by the beta subunits. This is ATP synthase subunit beta from Dictyoglomus thermophilum (strain ATCC 35947 / DSM 3960 / H-6-12).